The primary structure comprises 166 residues: Large ribosomal subunit protein uL10 (166 aa).

Belongs to the universal ribosomal protein uL10 family. In terms of assembly, part of the ribosomal stalk of the 50S ribosomal subunit. The N-terminus interacts with L11 and the large rRNA to form the base of the stalk. The C-terminus forms an elongated spine to which L12 dimers bind in a sequential fashion forming a multimeric L10(L12)X complex.

Functionally, forms part of the ribosomal stalk, playing a central role in the interaction of the ribosome with GTP-bound translation factors. The chain is Large ribosomal subunit protein uL10 from Marinomonas sp. (strain MWYL1).